Reading from the N-terminus, the 435-residue chain is MASNSWNASSSPGEAREDGPEGLDKGLDNDAEGVWSPDIEQSFQEALAIYPPCGRRKIILSDEGKMYGRNELIARYIKLRTGKTRTRKQVSSHIQVLARKKVREYQVGIKAMNLDQVSKDKALQSMASMSSAQIVSASVLQNKFSPPSPLPQAVFSTSSRFWSSPPLLGQQPGPSQDIKPFAQPAYPIQPPLPPTLSSYEPLAPLPSAAASVPVWQDRTIASSRLRLLEYSAFMEVQRDPDTYSKHLFVHIGQTNPAFSDPPLEAVDVRQIYDKFPEKKGGLKELYEKGPPNAFFLVKFWADLNSTIQEGPGAFYGVSSQYSSADSMTISVSTKVCSFGKQVVEKVETEYARLENGRFVYRIHRSPMCEYMINFIHKLKHLPEKYMMNSVLENFTILQVVTSRDSQETLLVIAFVFEVSTSEHGAQHHVYKLVKD.

Over residues 1–12 the composition is skewed to polar residues; that stretch reads MASNSWNASSSP. The tract at residues 1-34 is disordered; it reads MASNSWNASSSPGEAREDGPEGLDKGLDNDAEGV. Ala2 bears the N-acetylalanine mark. Residues 14–28 show a composition bias toward basic and acidic residues; sequence EAREDGPEGLDKGLD. Residues 28-104 constitute a DNA-binding region (TEA); it reads DNDAEGVWSP…QVLARKKVRE (77 aa). Ser148 is subject to Phosphoserine. Residues 173 to 435 are transcriptional activation; that stretch reads GPSQDIKPFA…QHHVYKLVKD (263 aa).

Interacts with YAP1 and WWTR1/TAZ. Preferentially expressed in the placenta.

The protein localises to the nucleus. Transcription factor which plays a key role in the Hippo signaling pathway, a pathway involved in organ size control and tumor suppression by restricting proliferation and promoting apoptosis. The core of this pathway is composed of a kinase cascade wherein MST1/MST2, in complex with its regulatory protein SAV1, phosphorylates and activates LATS1/2 in complex with its regulatory protein MOB1, which in turn phosphorylates and inactivates YAP1 oncoprotein and WWTR1/TAZ. Acts by mediating gene expression of YAP1 and WWTR1/TAZ, thereby regulating cell proliferation, migration and epithelial mesenchymal transition (EMT) induction. Binds to multiple functional elements of the human chorionic somatomammotropin-B gene enhancer. The polypeptide is Transcriptional enhancer factor TEF-5 (TEAD3) (Homo sapiens (Human)).